A 309-amino-acid chain; its full sequence is Large ribosomal subunit protein uL22m (309 aa).

Residues 1–25 (MNFHTARISQVGVISRALLSSVSRR) constitute a mitochondrion transit peptide. A disordered region spans residues 40 to 63 (SLFGSITENKPKEGKNRGDEDAGS). Residues 48–59 (NKPKEGKNRGDE) are compositionally biased toward basic and acidic residues.

This sequence belongs to the universal ribosomal protein uL22 family. As to quaternary structure, component of the mitochondrial large ribosomal subunit (mt-LSU). Mature yeast 74S mitochondrial ribosomes consist of a small (37S) and a large (54S) subunit. The 37S small subunit contains a 15S ribosomal RNA (15S mt-rRNA) and 34 different proteins. The 54S large subunit contains a 21S rRNA (21S mt-rRNA) and 46 different proteins. uL22m forms the wall of the exit tunnel.

The protein localises to the mitochondrion. Functionally, component of the mitochondrial ribosome (mitoribosome), a dedicated translation machinery responsible for the synthesis of mitochondrial genome-encoded proteins, including at least some of the essential transmembrane subunits of the mitochondrial respiratory chain. The mitoribosomes are attached to the mitochondrial inner membrane and translation products are cotranslationally integrated into the membrane. The polypeptide is Large ribosomal subunit protein uL22m (MRPL22) (Saccharomyces cerevisiae (strain ATCC 204508 / S288c) (Baker's yeast)).